Consider the following 145-residue polypeptide: Ribonuclease H (145 aa).

The RNase H type-1 domain occupies 1-141 (MQEVTIYSDG…ADALANRGVE (141 aa)). Mg(2+) is bound by residues Asp-9, Glu-47, Asp-69, and Asp-133.

It belongs to the RNase H family. In terms of assembly, monomer. The cofactor is Mg(2+).

The protein localises to the cytoplasm. The enzyme catalyses Endonucleolytic cleavage to 5'-phosphomonoester.. Endonuclease that specifically degrades the RNA of RNA-DNA hybrids. This chain is Ribonuclease H, found in Cupriavidus necator (strain ATCC 17699 / DSM 428 / KCTC 22496 / NCIMB 10442 / H16 / Stanier 337) (Ralstonia eutropha).